The chain runs to 113 residues: MKITLSKRIGLLAFLLPCALALSTTVHAETNKLVIESGDSAQSRQHAAMEKEQWNDTRNLRRKVNKRTEKEWDKADAAFDNRDKCEQSANINAYWEPNTLRCLDRRTGRVITP.

A signal peptide spans 1 to 28 (MKITLSKRIGLLAFLLPCALALSTTVHA).

This sequence belongs to the UPF0482 family.

The sequence is that of UPF0482 protein YnfB from Shigella dysenteriae serotype 1 (strain Sd197).